The chain runs to 124 residues: UPF0738 protein ABC2521 (124 aa).

The protein belongs to the UPF0738 family.

In Shouchella clausii (strain KSM-K16) (Alkalihalobacillus clausii), this protein is UPF0738 protein ABC2521.